We begin with the raw amino-acid sequence, 201 residues long: Recombination protein RecR (201 aa).

The C4-type zinc finger occupies 60 to 75; it reads CKTCGNIDTQNPCTVC. In terms of domain architecture, Toprim spans 83-178; sequence AIIVVVADVA…KVTRLAHGVP (96 aa).

The protein belongs to the RecR family.

Its function is as follows. May play a role in DNA repair. It seems to be involved in an RecBC-independent recombinational process of DNA repair. It may act with RecF and RecO. This chain is Recombination protein RecR, found in Rhodopseudomonas palustris (strain BisA53).